Consider the following 698-residue polypeptide: Polyribonucleotide nucleotidyltransferase (698 aa).

Residues Asp490 and Asp496 each contribute to the Mg(2+) site. The 60-residue stretch at 557 to 616 (PKVVTMTIKPDKIRDVIGPGGKKINEIIDETGVKLDIEQDGTIFIGAVDQAMINRAREII) folds into the KH domain. The S1 motif domain maps to 626 to 694 (GQTYQATVKR…KQGRVNASHR (69 aa)).

This sequence belongs to the polyribonucleotide nucleotidyltransferase family. The cofactor is Mg(2+).

The protein resides in the cytoplasm. It catalyses the reaction RNA(n+1) + phosphate = RNA(n) + a ribonucleoside 5'-diphosphate. In terms of biological role, involved in mRNA degradation. Catalyzes the phosphorolysis of single-stranded polyribonucleotides processively in the 3'- to 5'-direction. The protein is Polyribonucleotide nucleotidyltransferase of Staphylococcus aureus (strain Mu3 / ATCC 700698).